The primary structure comprises 96 residues: MPGPTPSGTNVGSSGRSPSKAVAARAAGSTVRQRKNASCGTRSAGRTTSAGTGGMWRFYTEDSPGLKVGPVPVLVMSLLFIASVFMLHIWGKYTRS.

Positions 1 to 17 (MPGPTPSGTNVGSSGRS) are enriched in polar residues. Residues 1 to 54 (MPGPTPSGTNVGSSGRSPSKAVAARAAGSTVRQRKNASCGTRSAGRTTSAGTGG) are disordered. P2 bears the N-acetylproline mark. The Cytoplasmic portion of the chain corresponds to 2 to 71 (PGPTPSGTNV…DSPGLKVGPV (70 aa)). Residue S7 is modified to Phosphoserine. A Phosphothreonine modification is found at T9. 3 positions are modified to phosphoserine: S13, S14, and S17. C39 carries S-palmitoyl cysteine lipidation. A compositionally biased stretch (low complexity) spans 40-50 (GTRSAGRTTSA). Residues 72-91 (PVLVMSLLFIASVFMLHIWG) form a helical membrane-spanning segment. The Lumenal portion of the chain corresponds to 92-96 (KYTRS).

It belongs to the SEC61-beta family. The SEC61 channel-forming translocon complex consists of channel-forming core components SEC61A1, SEC61B and SEC61G and different auxiliary components such as SEC62 and SEC63. The SEC61 channel associates with the multi-pass translocon (MPT) complex. Interacts with TRAM1.

The protein resides in the endoplasmic reticulum membrane. Functionally, component of SEC61 channel-forming translocon complex that mediates transport of signal peptide-containing precursor polypeptides across the endoplasmic reticulum (ER). Forms a ribosome receptor and a gated pore in the ER membrane, both functions required for cotranslational translocation of nascent polypeptides. The SEC61 channel is also involved in ER membrane insertion of transmembrane proteins: it mediates membrane insertion of the first few transmembrane segments of proteins, while insertion of subsequent transmembrane regions of multi-pass membrane proteins is mediated by the multi-pass translocon (MPT) complex. The SEC61 channel cooperates with the translocating protein TRAM1 to import nascent proteins into the ER. The protein is Protein transport protein Sec61 subunit beta (SEC61B) of Canis lupus familiaris (Dog).